The following is a 379-amino-acid chain: NADH-rubredoxin oxidoreductase (379 aa).

2 disulfides stabilise this stretch: cysteine 26–cysteine 286 and cysteine 137–cysteine 216. FAD contacts are provided by residues 33–35, arginine 42, alanine 79, and tyrosine 125; that span reads NSE. Aspartate 259 lines the FAD pocket.

The protein belongs to the FAD-dependent oxidoreductase family. Monomer. It depends on FAD as a cofactor.

It catalyses the reaction 2 reduced [rubredoxin] + NAD(+) + H(+) = 2 oxidized [rubredoxin] + NADH. In terms of biological role, catalyzes the NADH-dependent reduction of rubredoxin (Rd). NADPH is a very poor electron donor compared to NADH. Functions as an intermediate component in the electron transfer chain: NADH-&gt;NROR-&gt;Rd-&gt;FprA1/2. Also functions as an intermediate component in the electron transfer chains from NADH to revRbr and Dfx. Therefore, is a key electron carrier in an efficient multienzyme complex that can scavenge O(2) and reactive oxygen species (ROS), and thus plays an important role in the oxidative stress defense system in C.acetobutylicum, an obligate anaerobic bacterium. This Clostridium acetobutylicum (strain ATCC 824 / DSM 792 / JCM 1419 / IAM 19013 / LMG 5710 / NBRC 13948 / NRRL B-527 / VKM B-1787 / 2291 / W) protein is NADH-rubredoxin oxidoreductase (nroR).